Here is a 289-residue protein sequence, read N- to C-terminus: MYG1 protein TC_0665 (289 aa).

This sequence belongs to the MYG1 family.

The protein is MYG1 protein TC_0665 of Chlamydia muridarum (strain MoPn / Nigg).